Here is a 704-residue protein sequence, read N- to C-terminus: Capsule polysaccharide modification protein LipA (704 aa).

It localises to the cell inner membrane. Its function is as follows. Involved in the phospholipid modification of the capsular polysaccharide, a strong requirement for its translocation to the cell surface. The sequence is that of Capsule polysaccharide modification protein LipA (lipA) from Neisseria meningitidis serogroup A / serotype 4A (strain DSM 15465 / Z2491).